A 136-amino-acid polypeptide reads, in one-letter code: UPF0216 protein PH0358 (136 aa).

This sequence belongs to the UPF0216 family.

In Pyrococcus horikoshii (strain ATCC 700860 / DSM 12428 / JCM 9974 / NBRC 100139 / OT-3), this protein is UPF0216 protein PH0358.